A 593-amino-acid chain; its full sequence is Arylsulfatase D (593 aa).

The first 33 residues, 1 to 33, serve as a signal peptide directing secretion; the sequence is MRSAARRGRAAPAARDSLPVLLFLCLLLKTCEP. Ca(2+) contacts are provided by D49 and D50. N-linked (GlcNAc...) asparagine glycosylation occurs at N61. C89 lines the Ca(2+) pocket. Catalysis depends on C89, which acts as the Nucleophile. 3-oxoalanine (Cys) is present on C89. N128 carries N-linked (GlcNAc...) asparagine glycosylation. Substrate is bound at residue K148. H150 is a catalytic residue. A substrate-binding site is contributed by H304. N347 carries N-linked (GlcNAc...) asparagine glycosylation. Residues D356 and H357 each contribute to the Ca(2+) site. Residue K381 participates in substrate binding.

Belongs to the sulfatase family. Ca(2+) serves as cofactor. The conversion to 3-oxoalanine (also known as C-formylglycine, FGly), of a serine or cysteine residue in prokaryotes and of a cysteine residue in eukaryotes, is critical for catalytic activity. Expressed in the pancreas, kidney, liver, lung, placenta, brain and heart.

Its subcellular location is the lysosome. The protein is Arylsulfatase D (ARSD) of Homo sapiens (Human).